A 449-amino-acid chain; its full sequence is Phosphoglucosamine mutase (449 aa).

Ser100 acts as the Phosphoserine intermediate in catalysis. Residues Ser100, Asp241, Asp243, and Asp245 each contribute to the Mg(2+) site. Position 100 is a phosphoserine (Ser100).

The protein belongs to the phosphohexose mutase family. The cofactor is Mg(2+). Activated by phosphorylation.

It carries out the reaction alpha-D-glucosamine 1-phosphate = D-glucosamine 6-phosphate. In terms of biological role, catalyzes the conversion of glucosamine-6-phosphate to glucosamine-1-phosphate. The polypeptide is Phosphoglucosamine mutase (Caldicellulosiruptor saccharolyticus (strain ATCC 43494 / DSM 8903 / Tp8T 6331)).